We begin with the raw amino-acid sequence, 262 residues long: Indole-3-glycerol phosphate synthase (262 aa).

This sequence belongs to the TrpC family.

The catalysed reaction is 1-(2-carboxyphenylamino)-1-deoxy-D-ribulose 5-phosphate + H(+) = (1S,2R)-1-C-(indol-3-yl)glycerol 3-phosphate + CO2 + H2O. The protein operates within amino-acid biosynthesis; L-tryptophan biosynthesis; L-tryptophan from chorismate: step 4/5. The sequence is that of Indole-3-glycerol phosphate synthase from Staphylococcus epidermidis (strain ATCC 12228 / FDA PCI 1200).